Here is a 546-residue protein sequence, read N- to C-terminus: Chaperonin GroEL (546 aa).

ATP contacts are provided by residues 30–33 (TLGP), Lys51, 87–91 (DGTTT), Gly415, 479–481 (NAA), and Asp495. Residues 526–546 (KKDEPAMPAGGGMGGMGGMDF) form a disordered region. The span at 534–546 (AGGGMGGMGGMDF) shows a compositional bias: gly residues.

It belongs to the chaperonin (HSP60) family. Forms a cylinder of 14 subunits composed of two heptameric rings stacked back-to-back. Interacts with the co-chaperonin GroES.

The protein localises to the cytoplasm. It carries out the reaction ATP + H2O + a folded polypeptide = ADP + phosphate + an unfolded polypeptide.. Together with its co-chaperonin GroES, plays an essential role in assisting protein folding. The GroEL-GroES system forms a nano-cage that allows encapsulation of the non-native substrate proteins and provides a physical environment optimized to promote and accelerate protein folding. The chain is Chaperonin GroEL from Xanthomonas campestris pv. campestris (strain 8004).